Reading from the N-terminus, the 360-residue chain is DNA replication and repair protein RecF (360 aa).

ATP is bound at residue 33-40 (GENGSGKT).

This sequence belongs to the RecF family.

The protein resides in the cytoplasm. Functionally, the RecF protein is involved in DNA metabolism; it is required for DNA replication and normal SOS inducibility. RecF binds preferentially to single-stranded, linear DNA. It also seems to bind ATP. This is DNA replication and repair protein RecF from Rickettsia africae (strain ESF-5).